The primary structure comprises 141 residues: Sperm protein associated with the nucleus on the X chromosome N3 (141 aa).

A compositionally biased stretch (polar residues) spans 1-10 (MEQPTSSTNG). 2 disordered regions span residues 1–47 (MEQP…TKTS) and 66–141 (NQLE…SGED). Residues 11–26 (EKTKSPCESNNKKNDE) show a composition bias toward basic and acidic residues. Residues 66-80 (NQLENEQSQENSINP) show a composition bias toward polar residues. Residues 84-103 (EEDEGVDLSEGSSNEDEDLG) show a composition bias toward acidic residues. Residues 132-141 (EGSSQDSGED) are compositionally biased toward polar residues.

It belongs to the SPAN-X family.

This Homo sapiens (Human) protein is Sperm protein associated with the nucleus on the X chromosome N3 (SPANXN3).